Consider the following 501-residue polypeptide: COP9 signalosome complex subunit 3 (501 aa).

A PCI domain is found at 275–445; sequence RFEDALFLLE…VFWTELSPVP (171 aa).

This sequence belongs to the CSN3 family. Component of the CSN complex, probably composed of csn-1, csn-2, csn-3, csn-4, csn-5, csn-6 and csn-7. Within the complex it probably interacts directly with csn-2 and csn-4. May interact with itself.

The protein resides in the cytoplasm. The protein localises to the nucleus. Component of the COP9 signalosome complex (CSN), a complex involved in various cellular and developmental processes. The CSN complex is an essential regulator of the ubiquitin (Ubl) conjugation pathway by mediating the deneddylation of the cullin subunits of the SCF-type E3 ligase complexes, leading to decrease the Ubl ligase activity of SCF. The CSN complex plays an essential role in embryogenesis and oogenesis and is required to regulate microtubule stability in the early embryo. Mediates mei-3/katanin targeting for degradation at the meiosis to mitosis transition via deneddylation of cul-3. The sequence is that of COP9 signalosome complex subunit 3 (csn-3) from Caenorhabditis elegans.